A 362-amino-acid chain; its full sequence is NAC domain-containing protein 5 (362 aa).

The 149-residue stretch at 3–151 folds into the NAC domain; the sequence is NPVGFRFRPT…TYTLCKVKFK (149 aa). The DNA-binding element occupies 107-157; sequence IGEKRVLVFKNHGGSKSDWAMHEYHATFSSPNQIMTYTLCKVKFKGERREF. The disordered stretch occupies residues 240–266; sequence DDRNNHTPQKPLTGVFSDHSTDGSDSD.

It localises to the nucleus. In Arabidopsis thaliana (Mouse-ear cress), this protein is NAC domain-containing protein 5 (NAC005).